The chain runs to 322 residues: Serine/threonine-protein phosphatase PP1-2 (322 aa).

Mn(2+) is bound by residues Asp-60, His-62, Asp-88, and Asn-120. His-121 functions as the Proton donor in the catalytic mechanism. Residues His-169 and His-244 each coordinate Mn(2+). Residues 298-322 (RQRVSQSSIKESKSATNSLKKSKNN) form a disordered region. A compositionally biased stretch (polar residues) spans 301–316 (VSQSSIKESKSATNSL).

This sequence belongs to the PPP phosphatase family. PP-1 subfamily. Mn(2+) serves as cofactor.

It carries out the reaction O-phospho-L-seryl-[protein] + H2O = L-seryl-[protein] + phosphate. The enzyme catalyses O-phospho-L-threonyl-[protein] + H2O = L-threonyl-[protein] + phosphate. Essential role in cell cycle control. PP1 is perhaps required for exit from mitosis. This is Serine/threonine-protein phosphatase PP1-2 (sds21) from Schizosaccharomyces pombe (strain 972 / ATCC 24843) (Fission yeast).